Here is a 417-residue protein sequence, read N- to C-terminus: Lipoyl synthase, mitochondrial (417 aa).

The transit peptide at 1 to 26 (MAVCARGLRCLGTPAVSLRLAASRSY) directs the protein to the mitochondrion. The segment at 27 to 61 (ATTTPPDPAIPNTPGAAATSSPAKRPRTSFQDKLN) is disordered. The span at 44-58 (ATSSPAKRPRTSFQD) shows a compositional bias: polar residues. [4Fe-4S] cluster contacts are provided by C134, C139, C145, C165, C169, C172, and S380. The Radical SAM core domain maps to 148–369 (GGSKSAATAT…KEKALEMGFL (222 aa)). The disordered stretch occupies residues 398–417 (ESTGPGSASVQDVATGDLVR).

Belongs to the radical SAM superfamily. Lipoyl synthase family. It depends on [4Fe-4S] cluster as a cofactor.

It localises to the mitochondrion. The catalysed reaction is [[Fe-S] cluster scaffold protein carrying a second [4Fe-4S](2+) cluster] + N(6)-octanoyl-L-lysyl-[protein] + 2 oxidized [2Fe-2S]-[ferredoxin] + 2 S-adenosyl-L-methionine + 4 H(+) = [[Fe-S] cluster scaffold protein] + N(6)-[(R)-dihydrolipoyl]-L-lysyl-[protein] + 4 Fe(3+) + 2 hydrogen sulfide + 2 5'-deoxyadenosine + 2 L-methionine + 2 reduced [2Fe-2S]-[ferredoxin]. It participates in protein modification; protein lipoylation via endogenous pathway; protein N(6)-(lipoyl)lysine from octanoyl-[acyl-carrier-protein]: step 2/2. Its function is as follows. Catalyzes the radical-mediated insertion of two sulfur atoms into the C-6 and C-8 positions of the octanoyl moiety bound to the lipoyl domains of lipoate-dependent enzymes, thereby converting the octanoylated domains into lipoylated derivatives. The chain is Lipoyl synthase, mitochondrial from Uncinocarpus reesii (strain UAMH 1704).